Here is a 492-residue protein sequence, read N- to C-terminus: Probable malate:quinone oxidoreductase 1 (492 aa).

The protein belongs to the MQO family. It depends on FAD as a cofactor.

The catalysed reaction is (S)-malate + a quinone = a quinol + oxaloacetate. Its pathway is carbohydrate metabolism; tricarboxylic acid cycle; oxaloacetate from (S)-malate (quinone route): step 1/1. This is Probable malate:quinone oxidoreductase 1 from Staphylococcus epidermidis (strain ATCC 12228 / FDA PCI 1200).